Reading from the N-terminus, the 108-residue chain is UPF0060 membrane protein YnfA (108 aa).

Topologically, residues 1 to 5 (MIKTT) are periplasmic. The chain crosses the membrane as a helical span at residues 6–26 (LLFFATALCEIIGCFLPWLWL). At 27 to 30 (KRNA) the chain is on the cytoplasmic side. A helical transmembrane segment spans residues 31–51 (SIWLLLPAGISLALFVWLLTL). Residues 52–60 (HPAASGRIY) are Periplasmic-facing. Residues 61-81 (AAYGGVYVCTALMWLRVVDGV) traverse the membrane as a helical segment. The Cytoplasmic portion of the chain corresponds to 82–84 (KLT). The helical transmembrane segment at 85 to 105 (LYDWTGALIALCGMLIIVAGW) threads the bilayer. Over 106–108 (GRT) the chain is Periplasmic.

The protein belongs to the UPF0060 family.

The protein resides in the cell inner membrane. The sequence is that of UPF0060 membrane protein YnfA from Shigella dysenteriae serotype 1 (strain Sd197).